The sequence spans 185 residues: Peptidyl-tRNA hydrolase (185 aa).

A tRNA-binding site is contributed by Tyr-14. His-19 serves as the catalytic Proton acceptor. Residues Tyr-65, Asn-67, and Asn-113 each coordinate tRNA.

It belongs to the PTH family. As to quaternary structure, monomer.

It is found in the cytoplasm. It carries out the reaction an N-acyl-L-alpha-aminoacyl-tRNA + H2O = an N-acyl-L-amino acid + a tRNA + H(+). Hydrolyzes ribosome-free peptidyl-tRNAs (with 1 or more amino acids incorporated), which drop off the ribosome during protein synthesis, or as a result of ribosome stalling. In terms of biological role, catalyzes the release of premature peptidyl moieties from peptidyl-tRNA molecules trapped in stalled 50S ribosomal subunits, and thus maintains levels of free tRNAs and 50S ribosomes. This is Peptidyl-tRNA hydrolase from Rickettsia bellii (strain RML369-C).